The primary structure comprises 107 residues: UPF0145 protein Sfri_2095 (107 aa).

This sequence belongs to the UPF0145 family.

The sequence is that of UPF0145 protein Sfri_2095 from Shewanella frigidimarina (strain NCIMB 400).